The sequence spans 395 residues: Chalcone synthase (395 aa).

Residue C164 is part of the active site.

It belongs to the thiolase-like superfamily. Chalcone/stilbene synthases family.

It catalyses the reaction (E)-4-coumaroyl-CoA + 3 malonyl-CoA + 3 H(+) = 2',4,4',6'-tetrahydroxychalcone + 3 CO2 + 4 CoA. Its pathway is secondary metabolite biosynthesis; flavonoid biosynthesis. Functionally, the primary product of this enzyme is 4,2',4',6'-tetrahydroxychalcone (also termed naringenin-chalcone or chalcone) which can under specific conditions spontaneously isomerize into naringenin. This Betula pendula (European white birch) protein is Chalcone synthase (CHS).